The sequence spans 840 residues: DNA mismatch repair protein MutS (840 aa).

Residue 601 to 608 (GPNMSGKS) participates in ATP binding.

This sequence belongs to the DNA mismatch repair MutS family.

Its function is as follows. This protein is involved in the repair of mismatches in DNA. It is possible that it carries out the mismatch recognition step. This protein has a weak ATPase activity. The protein is DNA mismatch repair protein MutS of Lactococcus lactis subsp. cremoris (strain MG1363).